We begin with the raw amino-acid sequence, 513 residues long: Teichoic acid ribitol-phosphate polymerase TarK (513 aa).

Belongs to the CDP-glycerol glycerophosphotransferase family.

The protein localises to the cell membrane. It carries out the reaction 4-O-[di(2R)-glycerylphospho]-N-acetyl-beta-D-mannosaminyl-(1-&gt;4)-N-acetyl-alpha-D-glucosaminyl di-trans,octa-cis-undecaprenyl diphosphate + n CDP-L-ribitol = 4-O-[(D-ribitylphospho)(n)-di{(2R)-glycerylphospho}]-N-acetyl-beta-D-mannosaminyl-(1-&gt;4)-N-acetyl-alpha-D-glucosaminyl di-trans,octa-cis-undecaprenyl diphosphate + n CMP + n H(+). It participates in cell wall biogenesis; poly(ribitol phosphate) teichoic acid biosynthesis. In terms of biological role, can catalyze the polymerization of the main chain of the major teichoic acid by sequential transfer of ribitol phosphate units from CDP-ribitol to the second glycerol phosphate attached to the disaccharide linkage unit. This Staphylococcus aureus (strain NCTC 8325 / PS 47) protein is Teichoic acid ribitol-phosphate polymerase TarK (tarK).